The primary structure comprises 472 residues: Tryptophan--tRNA ligase, cytoplasmic (472 aa).

One can recognise a WHEP-TRS domain in the interval 9–65 (SPLELFNSIATQGELVRSLKAGNASKDEIDSAVKMLLSLKMSYKAAMGEDYKANCPP). Position 155 is an N6-succinyllysine (Lys-155). A 'HIGH' region motif is present at residues 165 to 174 (PSSEAMHVGH). The 'KMSKS' region signature appears at 350 to 354 (KMSAS). Ser-352 bears the Phosphoserine mark.

It belongs to the class-I aminoacyl-tRNA synthetase family. Homodimer. Interacts with oxidized form of GAPDH. Proteolytic cleavage generates 2 forms; T1-TrpRS and T2-TrpRS.

The protein localises to the cytoplasm. The catalysed reaction is tRNA(Trp) + L-tryptophan + ATP = L-tryptophyl-tRNA(Trp) + AMP + diphosphate + H(+). Functionally, catalyzes the attachment of tryptophan to tRNA(Trp) in a two-step reaction: tryptophan is first activated by ATP to form Trp-AMP and then transferred to the acceptor end of the tRNA(Trp). Could also possess an angiostatic activity. This is Tryptophan--tRNA ligase, cytoplasmic (WARS1) from Pongo abelii (Sumatran orangutan).